Consider the following 328-residue polypeptide: Coiled-coil domain-containing protein 54 (328 aa).

Residues 122–151 are a coiled coil; that stretch reads TTKDILSMKEDIKALKKKVTELEKQNSYSR. Phosphothreonine is present on Thr-182. Residues 186–197 show a composition bias toward basic and acidic residues; that stretch reads TDREMSSAEPEK. Residues 186-205 are disordered; sequence TDREMSSAEPEKVPSYPKST.

The polypeptide is Coiled-coil domain-containing protein 54 (CCDC54) (Macaca fascicularis (Crab-eating macaque)).